The primary structure comprises 482 residues: FAD-dependent monooxygenase esdpE (482 aa).

An N-terminal signal peptide occupies residues 1-21 (MGAERLKVIIVGGSIAGLTLA). FAD-binding residues include glutamate 35 and arginine 108. Asparagine 243 is a glycosylation site (N-linked (GlcNAc...) asparagine). Residues aspartate 308 and alanine 321 each contribute to the FAD site. The chain crosses the membrane as a helical span at residues 440–460 (LFSGSLLLIMSVALLFGVICW).

It belongs to the paxM FAD-dependent monooxygenase family. It depends on FAD as a cofactor.

It is found in the membrane. It participates in secondary metabolite biosynthesis; terpenoid biosynthesis. FAD-dependent monooxygenase; part of the cluster that mediates the biosynthesis of shearones, diterpenoid pyrones (DPs) which are structurally diverse meroterpenoids consisting of a diterpene linked by a pyrone, and which may exhibit a range of bioactivities. Within the pathway, esdpE takes part to the biosynthesis of the molecular scaffold by catalyzing the formation of an (S)-epoxide ring at the terminal olefin of the geranylgeranyl group. The molecular scaffold is commonly biosynthesized by a series of enzymes including the non-reducing polyketide synthase (NR-PKS) esdpA that generates an alpha-pyrone; the prenyltransferase esdpC that attaches a geranylgeranyl pyrophosphate (GGPP) produced by the GGPP synthase (GGPPS) esdpD onto the pyrone unit; the FAD-dependent monooxygenase esdpE that converts an olefin on the diterpene unit into an epoxide; and the terpene cyclase esdpB that catalyzes the cyclization reactions to give the molecular backbone shearone A. In the modification steps, esdpF oxidizes the hydroxy group to a ketone at C-3 and esdpG then attaches hydroxy groups at both C-11 and C-12. After that, esdpI hydroxylates at C-20 and esdpH hydroxylates at C-6'. The ether bridge is generated by nucleophilic attack of the hydroxy group at C-20 to the carbonyl carbon at C-3. EsdpH can also functions prior to esdpI. The different combinations of these modification enzymes lead to the production of diverse shearone derivatives, shearone I being the end product of the pathway. The alpha-ketoglutarate-dependent dioxygenase esdpJ seems not to be involved in this pathway. This Penicillium shearii (Eupenicillium shearii) protein is FAD-dependent monooxygenase esdpE.